The sequence spans 147 residues: Microtubule-associated protein 1 light chain 3 gamma (147 aa).

Phosphoserine; by TBK1 is present on residues Ser93 and Ser96. A lipid anchor (Phosphatidylethanolamine amidated glycine; alternate) is attached at Gly126. Gly126 carries Phosphatidylserine amidated glycine; alternate lipidation. Positions 127–147 (CLESAAPRDGSSLEDRPCNPL) are cleaved as a propeptide — removed in mature form.

Belongs to the ATG8 family. 3 different light chains, LC1 (a cleavage product of MAP1B), LC2 (a cleavage product of MAP1A) and LC3 (produced by one of the MAP1LC3 genes), can associate with the MAP1A or MAP1B heavy chains. Interacts with TP53INP1 and TP53INP2. Interacts with CALCOCO2. Interacts with TECPR2. Interacts with TBC1D5. Found in a complex with UBQLN1 and UBQLN2. Interacts with UBQLN4 (via STI1 1 and 2 domains). Interacts with UBQLN1 in the presence of UBQLN4. Interacts with TRIM5. Interacts with ATG13. Interacts with MEFV and TRIM21. Interacts with WDR81; recruits MAP1LC3C to ubiquitinated protein aggregates in the aggrephagy process. Interacts with MOAP1 (via LIR motif). Interacts with reticulophagy regulators RETREG1, RETREG2 and RETREG3. Interacts with TAX1BP1. Interacts with IRGM. Interacts with SPART. In terms of processing, the precursor molecule is cleaved by ATG4 (ATG4A, ATG4B, ATG4C or ATG4D) to expose the glycine at the C-terminus and form the cytosolic form, LC3-I. The processed form is then activated by APG7L/ATG7, transferred to ATG3 and conjugated to phosphatidylethanolamine (PE) phospholipid to form the membrane-bound form, LC3-II. During non-canonical autophagy, the processed form is conjugated to phosphatidylserine (PS) phospholipid. ATG4 proteins also mediate the delipidation of PE-conjugated forms. In addition, ATG4B and ATG4D mediate delipidation of ATG8 proteins conjugated to PS during non-canonical autophagy. Post-translationally, (Microbial infection) The Legionella effector RavZ is a deconjugating enzyme that hydrolyzes the amide bond between the C-terminal glycine residue and an adjacent aromatic residue in ATG8 proteins conjugated to phosphatidylethanolamine (PE), producing an ATG8 protein that is resistant to reconjugation by the host machinery due to the cleavage of the reactive C-terminal glycine. RavZ is also able to mediate delipidation of ATG8 proteins conjugated to phosphatidylserine (PS). Phosphorylation at Ser-96 and Ser-98 by TBK1 prevents interaction with ATG4 (ATG4A, ATG4B, ATG4C or ATG4D). Phosphorylation by TBK1 on autophagosomes prevents their delipidation by ATG4 and premature removal from nascent autophagosomes. As to expression, most abundant in placenta, lung and ovary.

The protein localises to the cytoplasmic vesicle. It is found in the autophagosome membrane. The protein resides in the endomembrane system. It localises to the cytoplasm. Its subcellular location is the cytoskeleton. Ubiquitin-like modifier that plays a crucial role in antibacterial autophagy (xenophagy) through the selective binding of CALCOCO2. Recruits all ATG8 family members to infecting bacteria such as S.typhimurium. May also play a role in aggrephagy, the macroautophagic degradation of ubiquitinated and aggregated proteins. The chain is Microtubule-associated protein 1 light chain 3 gamma (MAP1LC3C) from Homo sapiens (Human).